The sequence spans 444 residues: Adenylosuccinate synthetase (444 aa).

GTP-binding positions include 13–19 and 41–43; these read GDEGKGK and GHT. D14 functions as the Proton acceptor in the catalytic mechanism. Residues D14 and G41 each contribute to the Mg(2+) site. Residues 14–17, 39–42, T129, R143, Q224, T239, and R303 each bind IMP; these read DEGK and NAGH. Residue H42 is the Proton donor of the active site. 299-305 is a substrate binding site; it reads TTTGRRR. GTP is bound by residues R305, 331-333, and 413-415; these read KLD and SLG.

It belongs to the adenylosuccinate synthetase family. As to quaternary structure, homodimer. Mg(2+) serves as cofactor.

It is found in the cytoplasm. It catalyses the reaction IMP + L-aspartate + GTP = N(6)-(1,2-dicarboxyethyl)-AMP + GDP + phosphate + 2 H(+). It participates in purine metabolism; AMP biosynthesis via de novo pathway; AMP from IMP: step 1/2. Functionally, plays an important role in the de novo pathway of purine nucleotide biosynthesis. Catalyzes the first committed step in the biosynthesis of AMP from IMP. The polypeptide is Adenylosuccinate synthetase (Synechocystis sp. (strain ATCC 27184 / PCC 6803 / Kazusa)).